A 312-amino-acid chain; its full sequence is 4-diphosphocytidyl-2-C-methyl-D-erythritol kinase (312 aa).

Lys16 is an active-site residue. 101–111 (PIGAGLAGGSS) contributes to the ATP binding site. Asp143 is a catalytic residue.

The protein belongs to the GHMP kinase family. IspE subfamily.

The catalysed reaction is 4-CDP-2-C-methyl-D-erythritol + ATP = 4-CDP-2-C-methyl-D-erythritol 2-phosphate + ADP + H(+). Its pathway is isoprenoid biosynthesis; isopentenyl diphosphate biosynthesis via DXP pathway; isopentenyl diphosphate from 1-deoxy-D-xylulose 5-phosphate: step 3/6. Its function is as follows. Catalyzes the phosphorylation of the position 2 hydroxy group of 4-diphosphocytidyl-2C-methyl-D-erythritol. The protein is 4-diphosphocytidyl-2-C-methyl-D-erythritol kinase of Prochlorococcus marinus (strain MIT 9515).